Here is a 777-residue protein sequence, read N- to C-terminus: Serine/threonine-protein kinase PLK4 (777 aa).

One can recognise a Protein kinase domain in the interval 14-268 (YEVQHLLGKG…LEQVLRHPFL (255 aa)). ATP is bound by residues 20–28 (LGKGGFASV) and K43. D139 serves as the catalytic Proton acceptor. The span at 371-381 (TNNLAPFTSDS) shows a compositional bias: polar residues. The interval 371–390 (TNNLAPFTSDSDMIPSPVGE) is disordered. A Cryptic POLO box 1 (CPB1) domain is found at 390-507 (EKRLLMPPLE…ARFVGLVKSK (118 aa)). The 104-residue stretch at 508–611 (TPKITFFSSL…GRRPAADMHA (104 aa)) folds into the Cryptic POLO box 2 (CPB2) domain. The POLO box domain occupies 669 to 748 (PIKRITVPEI…MPQLQMKLKC (80 aa)).

Belongs to the protein kinase superfamily. Ser/Thr protein kinase family. CDC5/Polo subfamily. Homodimer. Ubiquitinated by the SCF(Slimb) ubiquitin ligase complex; leading to its degradation by the proteasome during interphase and regulating centriole number and ensuring the block to centriole reduplication.

It is found in the cytoplasm. It localises to the cytoskeleton. Its subcellular location is the microtubule organizing center. The protein resides in the centrosome. The protein localises to the centriole. The enzyme catalyses L-seryl-[protein] + ATP = O-phospho-L-seryl-[protein] + ADP + H(+). It carries out the reaction L-threonyl-[protein] + ATP = O-phospho-L-threonyl-[protein] + ADP + H(+). Serine/threonine-protein kinase that plays a central role in centriole duplication. Able to trigger procentriole formation on the surface of the mother centriole cylinder, using mother centriole as a platform, leading to the recruitment of centriole biogenesis proteins such as sas-6. When overexpressed, it is able to induce centrosome amplification through the simultaneous generation of multiple procentrioles adjoining each parental centriole during S phase. Centrosome amplification following overexpression can initiate tumorigenesis, highlighting the importance of centrosome regulation in cancers. In Drosophila pseudoobscura pseudoobscura (Fruit fly), this protein is Serine/threonine-protein kinase PLK4 (SAK).